Here is a 437-residue protein sequence, read N- to C-terminus: ATP-dependent protease ATPase subunit HslU (437 aa).

ATP is bound by residues Ile-18, 60–65 (GVGKTE), Asp-250, Glu-315, and Arg-387.

This sequence belongs to the ClpX chaperone family. HslU subfamily. In terms of assembly, a double ring-shaped homohexamer of HslV is capped on each side by a ring-shaped HslU homohexamer. The assembly of the HslU/HslV complex is dependent on binding of ATP.

Its subcellular location is the cytoplasm. In terms of biological role, ATPase subunit of a proteasome-like degradation complex; this subunit has chaperone activity. The binding of ATP and its subsequent hydrolysis by HslU are essential for unfolding of protein substrates subsequently hydrolyzed by HslV. HslU recognizes the N-terminal part of its protein substrates and unfolds these before they are guided to HslV for hydrolysis. The sequence is that of ATP-dependent protease ATPase subunit HslU from Dinoroseobacter shibae (strain DSM 16493 / NCIMB 14021 / DFL 12).